The primary structure comprises 294 residues: ATP synthase gamma chain (294 aa).

It belongs to the ATPase gamma chain family. As to quaternary structure, F-type ATPases have 2 components, CF(1) - the catalytic core - and CF(0) - the membrane proton channel. CF(1) has five subunits: alpha(3), beta(3), gamma(1), delta(1), epsilon(1). CF(0) has three main subunits: a, b and c.

The protein resides in the cell membrane. Produces ATP from ADP in the presence of a proton gradient across the membrane. The gamma chain is believed to be important in regulating ATPase activity and the flow of protons through the CF(0) complex. The sequence is that of ATP synthase gamma chain from Ruminiclostridium cellulolyticum (strain ATCC 35319 / DSM 5812 / JCM 6584 / H10) (Clostridium cellulolyticum).